The primary structure comprises 412 residues: Divalent metal cation transporter MntH (412 aa).

The next 10 membrane-spanning stretches (helical) occupy residues 19–39, 46–66, 98–118, 122–142, 155–175, 196–216, 241–261, 286–306, 348–368, and 392–412; these read LSLM…GNFA, AAYG…AMLI, WVQA…GAAI, LLLG…TFLI, MVIG…LVFS, AVLL…IYLH, IAMT…AAAF, AAAV…TVVG, VLVL…VPLL, and LIVV…MSGI.

It belongs to the NRAMP family.

The protein localises to the cell inner membrane. Functionally, h(+)-stimulated, divalent metal cation uptake system. The polypeptide is Divalent metal cation transporter MntH (Pectobacterium carotovorum subsp. carotovorum (strain PC1)).